The chain runs to 25 residues: Caerin-1.9 (25 aa).

Leu-25 carries the leucine amide modification.

This sequence belongs to the frog skin active peptide (FSAP) family. Caerin subfamily. Expressed by the skin dorsal glands.

The protein resides in the secreted. Its function is as follows. Antimicrobial peptide. Adopts an alpha helical conformation which can disrupt bacterial membranes. Strongly inhibits the formation of NO by neuronal nitric oxide synthase (nNOS) at micromolar concentrations. Acts by a non-competitive mechanism, probably by binding to calcium/calmodulin and as a consequence blocking calmodulin attachment to nNOS. The chain is Caerin-1.9 from Ranoidea chloris (Red-eyed tree frog).